We begin with the raw amino-acid sequence, 116 residues long: Somatostatin (116 aa).

The N-terminal stretch at 1 to 24 (MLSCRLQCALALLSIALAVGTVSA) is a signal peptide. Residues 25-88 (APSDPRLRQF…QDEVRLELER (64 aa)) constitute a propeptide that is removed on maturation. The segment at 60–82 (PSQTENEALESEDLSRGAEQDEV) is disordered. Residues 72-82 (DLSRGAEQDEV) are compositionally biased toward basic and acidic residues. A disulfide bond links Cys105 and Cys116.

This sequence belongs to the somatostatin family.

Its subcellular location is the secreted. Its function is as follows. Somatostatin inhibits the release of somatotropin. The polypeptide is Somatostatin (SST) (Gallus gallus (Chicken)).